Here is a 316-residue protein sequence, read N- to C-terminus: tRNA dimethylallyltransferase (316 aa).

17-24 contributes to the ATP binding site; sequence GPTASGKT. Substrate is bound at residue 19 to 24; the sequence is TASGKT. 4 interaction with substrate tRNA regions span residues 42–45, 166–170, 247–252, and 280–287; these read DSAL, QRLSR, RCVGYR, and KRQITWLR.

It belongs to the IPP transferase family. As to quaternary structure, monomer. Mg(2+) serves as cofactor.

It carries out the reaction adenosine(37) in tRNA + dimethylallyl diphosphate = N(6)-dimethylallyladenosine(37) in tRNA + diphosphate. In terms of biological role, catalyzes the transfer of a dimethylallyl group onto the adenine at position 37 in tRNAs that read codons beginning with uridine, leading to the formation of N6-(dimethylallyl)adenosine (i(6)A). The polypeptide is tRNA dimethylallyltransferase (Shigella boydii serotype 18 (strain CDC 3083-94 / BS512)).